A 909-amino-acid polypeptide reads, in one-letter code: Translation initiation factor IF-2 (909 aa).

The interval 49–314 is disordered; the sequence is LNREQGGSAG…GKQRKTSTLQ (266 aa). Composition is skewed to basic and acidic residues over residues 99–177, 186–236, and 255–270; these read DAVE…EHKQ, IQSE…KWSS, and RAAE…GDRR. Residues 271 to 285 show a composition bias toward basic residues; the sequence is ARGRSGKATRQKKNN. The segment covering 286 to 299 has biased composition (basic and acidic residues); sequence KHSESKADREEARA. Residues 408 to 577 enclose the tr-type G domain; sequence PRAPVVTIMG…LLQAEVLELK (170 aa). The G1 stretch occupies residues 417–424; the sequence is GHVDHGKT. 417 to 424 is a GTP binding site; sequence GHVDHGKT. Positions 442–446 are G2; it reads GITQH. The G3 stretch occupies residues 463 to 466; it reads DTPG. GTP is bound by residues 463–467 and 517–520; these read DTPGH and NKID. Residues 517–520 are G4; sequence NKID. A G5 region spans residues 553 to 555; that stretch reads SAK.

Belongs to the TRAFAC class translation factor GTPase superfamily. Classic translation factor GTPase family. IF-2 subfamily.

It localises to the cytoplasm. One of the essential components for the initiation of protein synthesis. Protects formylmethionyl-tRNA from spontaneous hydrolysis and promotes its binding to the 30S ribosomal subunits. Also involved in the hydrolysis of GTP during the formation of the 70S ribosomal complex. This Photorhabdus laumondii subsp. laumondii (strain DSM 15139 / CIP 105565 / TT01) (Photorhabdus luminescens subsp. laumondii) protein is Translation initiation factor IF-2.